The primary structure comprises 145 residues: Small ribosomal subunit protein bS6 (145 aa).

Residues 113 to 132 are compositionally biased toward basic and acidic residues; that stretch reads ENMKKNERKAPKEPVKKDEE. The segment at 113–145 is disordered; sequence ENMKKNERKAPKEPVKKDEEENKESEEEITSEE. Residues 133 to 145 are compositionally biased toward acidic residues; the sequence is ENKESEEEITSEE.

This sequence belongs to the bacterial ribosomal protein bS6 family.

In terms of biological role, binds together with bS18 to 16S ribosomal RNA. The sequence is that of Small ribosomal subunit protein bS6 from Campylobacter hominis (strain ATCC BAA-381 / DSM 21671 / CCUG 45161 / LMG 19568 / NCTC 13146 / CH001A).